Here is a 132-residue protein sequence, read N- to C-terminus: Agouti-signaling protein (132 aa).

The first 22 residues, 1 to 22 (MDVTRLLLATLLVFLCFFTAYS), serve as a signal peptide directing secretion. An N-linked (GlcNAc...) asparagine glycan is attached at Asn39. The disordered stretch occupies residues 61 to 87 (QISRKEAEKKRSSKKEASMKKVARPRT). Basic and acidic residues predominate over residues 63 to 79 (SRKEAEKKRSSKKEASM). 5 disulfides stabilise this stretch: Cys93–Cys108, Cys100–Cys114, Cys107–Cys125, Cys111–Cys132, and Cys116–Cys123. The Agouti domain occupies 93-132 (CVATRDSCKPPAPACCDPCAFCQCRFFRSACSCRVLSLNC).

The protein resides in the secreted. Its function is as follows. Involved in the regulation of melanogenesis. The binding of ASP to MC1R precludes alpha-MSH initiated signaling and thus blocks production of cAMP, leading to a down-regulation of eumelanogenesis (brown/black pigment) and thus increasing synthesis of pheomelanin (yellow/red pigment). The protein is Agouti-signaling protein (ASIP) of Macaca hecki (Heck's macaque).